The sequence spans 153 residues: Aspartate carbamoyltransferase regulatory chain (153 aa).

The Zn(2+) site is built by cysteine 109, cysteine 114, cysteine 138, and cysteine 141.

The protein belongs to the PyrI family. Contains catalytic and regulatory chains. Zn(2+) is required as a cofactor.

In terms of biological role, involved in allosteric regulation of aspartate carbamoyltransferase. In Salmonella paratyphi A (strain ATCC 9150 / SARB42), this protein is Aspartate carbamoyltransferase regulatory chain.